The primary structure comprises 459 residues: Autophagy-related protein 18 (459 aa).

WD repeat units follow at residues Met1–Ser39 and Ala188–Gln228. Residues Phe229–Gly232 are necessary for proper localization to vacuole membrane. Positions Phe229–Thr233 match the L/FRRG motif motif. One copy of the WD 3 repeat lies at Thr233–Thr272. The interval Leu264–Leu339 is disordered. Residues Gly265–Pro277 are compositionally biased toward low complexity. The span at Arg285–Asp296 shows a compositional bias: basic and acidic residues. Over residues Pro319–Arg330 the composition is skewed to gly residues. A WD 4 repeat occupies Ala393 to Gly433.

Belongs to the WD repeat PROPPIN family. As to quaternary structure, component of the PI(3,5)P2 regulatory complex. Interacts with ATG2 and ATG9. The ATG2-ATG18 complex is essential for autophagosome formation.

The protein resides in the preautophagosomal structure membrane. It is found in the vacuole membrane. The protein localises to the endosome membrane. Its function is as follows. Component of the PI(3,5)P2 regulatory complex that regulates both the synthesis and turnover of phosphatidylinositol 3,5-bisphosphate (PtdIns(3,5)P2). Plays an important role in osmotically-induced vacuole fragmentation. Required for cytoplasm to vacuole transport (Cvt) vesicle formation, pexophagy and starvation-induced autophagy. Involved in correct ATG9 trafficking to the pre-autophagosomal structure. With ATG2, protects ATG8 from ATG4-mediated cleavage. Autophagy is required for proper vegetative growth, asexual/sexual reproduction, and full virulence. Autophagy is particularly involved in the biosynthesis of deoxynivalenol (DON), an important virulence determinant. The sequence is that of Autophagy-related protein 18 from Gibberella zeae (strain ATCC MYA-4620 / CBS 123657 / FGSC 9075 / NRRL 31084 / PH-1) (Wheat head blight fungus).